The following is a 212-amino-acid chain: Orotate phosphoribosyltransferase (212 aa).

Position 26 (Lys26) interacts with 5-phospho-alpha-D-ribose 1-diphosphate. Residue 34–35 (FF) participates in orotate binding. Residues 72–73 (YK), Arg98, Lys99, Lys102, His104, and 123–131 (DDVITAGTA) contribute to the 5-phospho-alpha-D-ribose 1-diphosphate site. Orotate is bound by residues Thr127 and Arg155.

The protein belongs to the purine/pyrimidine phosphoribosyltransferase family. PyrE subfamily. Homodimer. Mg(2+) serves as cofactor.

It carries out the reaction orotidine 5'-phosphate + diphosphate = orotate + 5-phospho-alpha-D-ribose 1-diphosphate. The protein operates within pyrimidine metabolism; UMP biosynthesis via de novo pathway; UMP from orotate: step 1/2. Catalyzes the transfer of a ribosyl phosphate group from 5-phosphoribose 1-diphosphate to orotate, leading to the formation of orotidine monophosphate (OMP). This Marinobacter nauticus (strain ATCC 700491 / DSM 11845 / VT8) (Marinobacter aquaeolei) protein is Orotate phosphoribosyltransferase.